The sequence spans 75 residues: U6-lycotoxin-Ls1b (75 aa).

A signal peptide spans M1–A21. A propeptide spanning residues E22–R25 is cleaved from the precursor.

Belongs to the neurotoxin 19 (CSTX) family. 06 (U6-Lctx) subfamily. In terms of processing, contains 4 disulfide bonds. Expressed by the venom gland.

Its subcellular location is the secreted. This Lycosa singoriensis (Wolf spider) protein is U6-lycotoxin-Ls1b.